The following is a 915-amino-acid chain: Isoleucine--tRNA ligase (915 aa).

The short motif at 64-74 (PYANGNFHVGH) is the 'HIGH' region element. Glutamate 557 contributes to the L-isoleucyl-5'-AMP binding site. Residues 598–602 (AMSKS) carry the 'KMSKS' region motif. Lysine 601 lines the ATP pocket. Positions 887, 890, 902, and 905 each coordinate Zn(2+).

It belongs to the class-I aminoacyl-tRNA synthetase family. IleS type 1 subfamily. As to quaternary structure, monomer. The cofactor is Zn(2+).

It localises to the cytoplasm. The catalysed reaction is tRNA(Ile) + L-isoleucine + ATP = L-isoleucyl-tRNA(Ile) + AMP + diphosphate. Its function is as follows. Catalyzes the attachment of isoleucine to tRNA(Ile). As IleRS can inadvertently accommodate and process structurally similar amino acids such as valine, to avoid such errors it has two additional distinct tRNA(Ile)-dependent editing activities. One activity is designated as 'pretransfer' editing and involves the hydrolysis of activated Val-AMP. The other activity is designated 'posttransfer' editing and involves deacylation of mischarged Val-tRNA(Ile). In Leptospira biflexa serovar Patoc (strain Patoc 1 / ATCC 23582 / Paris), this protein is Isoleucine--tRNA ligase.